Consider the following 2282-residue polypeptide: Protein Ycf2 (2282 aa).

1637–1644 (GSIGTGRS) lines the ATP pocket.

This sequence belongs to the Ycf2 family.

It localises to the plastid. It is found in the chloroplast stroma. Probable ATPase of unknown function. Its presence in a non-photosynthetic plant (Epifagus virginiana) and experiments in tobacco indicate that it has an essential function which is probably not related to photosynthesis. In Citrus sinensis (Sweet orange), this protein is Protein Ycf2.